Consider the following 495-residue polypeptide: UDP-N-acetylmuramoyl-L-alanyl-D-glutamate--2,6-diaminopimelate ligase (495 aa).

UDP-N-acetyl-alpha-D-muramoyl-L-alanyl-D-glutamate is bound by residues L27, S29, and 44-46 (HKA). ATP is bound at residue 116–122 (GTNGKTT). Residues N157, 158-159 (TT), S185, Q191, and R193 each bind UDP-N-acetyl-alpha-D-muramoyl-L-alanyl-D-glutamate. K225 is modified (N6-carboxylysine). Meso-2,6-diaminopimelate contacts are provided by residues R390, 414 to 417 (DNPR), G465, and E469. The Meso-diaminopimelate recognition motif motif lies at 414-417 (DNPR).

This sequence belongs to the MurCDEF family. MurE subfamily. Requires Mg(2+) as cofactor. Post-translationally, carboxylation is probably crucial for Mg(2+) binding and, consequently, for the gamma-phosphate positioning of ATP.

The protein localises to the cytoplasm. The catalysed reaction is UDP-N-acetyl-alpha-D-muramoyl-L-alanyl-D-glutamate + meso-2,6-diaminopimelate + ATP = UDP-N-acetyl-alpha-D-muramoyl-L-alanyl-gamma-D-glutamyl-meso-2,6-diaminopimelate + ADP + phosphate + H(+). It functions in the pathway cell wall biogenesis; peptidoglycan biosynthesis. Functionally, catalyzes the addition of meso-diaminopimelic acid to the nucleotide precursor UDP-N-acetylmuramoyl-L-alanyl-D-glutamate (UMAG) in the biosynthesis of bacterial cell-wall peptidoglycan. The sequence is that of UDP-N-acetylmuramoyl-L-alanyl-D-glutamate--2,6-diaminopimelate ligase from Pectobacterium atrosepticum (strain SCRI 1043 / ATCC BAA-672) (Erwinia carotovora subsp. atroseptica).